The primary structure comprises 703 residues: MGLHGDGGSPAAGAGPWRSGALRGSVAVFASVAAVFTLTLPRSLPGGDSGELITAAHELGVAHPPGYPLFTLLASLTITLFPFGSVAYRVNLLCGLFGAVAASLLFYTVFRLSGSHAGGILAAGVFSFSRLTWQWSIAAEVFSLNNLFVGLLMALTVRFEEATAAKERSKIAAIGAFSCGLSLCNQHTIVLYILCIIPWILFRLLKEKELTLSLLLRLTLAFSAGLLPYVYLPVSSYLSRARWTWGDQTTLRGFLTHFFREEYGTFSLAKSEVGSSVSTVLLSQVINMKTELSFNIQALAVWANICLARKDRRKSSVVWLFTGMLCLYSLFFAWRANLDISKPLFMGVVERFWLQSNAVVAVLAGLGLATLVSETNRVLHCTGIRNLEWLSAALFVAYQVYSNYSICDQRTNNVIDQFARNLLDSMPQDAIILLRGDLPGNALRYLHYCEGLRPDVSLVDQEMMTYEWYLPKMARHLPGVHFPGDRWNPVEGVLPSGMVTFNLYHFLEMNKQKETFVCIGIHEGDPTWKKDYSLWPWGSCDKLVPSKIVFNPEEWIERTRAIYNWTEAYERFGPSSWESVANEEMWQARMKTPFFIFSLAESAAVPADVKAQLYTHAYKLYKEIVYLQEEHPVNWHKNYAIACERMLRLPGTGIDPEVLLSEAIRHFHLYTQKAQNDPQRADIIAALKHLRRELQSLRNIKKV.

8 consecutive transmembrane segments (helical) span residues 20–40, 68–88, 90–110, 137–157, 182–202, 218–238, 314–334, and 352–372; these read GALRGSVAVFASVAAVFTLTL, PLFTLLASLTITLFPFGSVAY, VNLLCGLFGAVAASLLFYTVF, IAAEVFSLNNLFVGLLMALTV, SLCNQHTIVLYILCIIPWILF, LTLAFSAGLLPYVYLPVSSYL, KSSVVWLFTGMLCLYSLFFAW, and FWLQSNAVVAVLAGLGLATLV. N-linked (GlcNAc...) asparagine glycosylation is found at Asn-403 and Asn-564.

This sequence belongs to the glycosyltransferase 117 (GT117) family.

It is found in the endoplasmic reticulum membrane. It carries out the reaction a di-trans,poly-cis-dolichyl beta-D-mannosyl phosphate + L-seryl-[protein] = 3-O-(alpha-D-mannosyl)-L-seryl-[protein] + a di-trans,poly-cis-dolichyl phosphate + H(+). The enzyme catalyses a di-trans,poly-cis-dolichyl beta-D-mannosyl phosphate + L-threonyl-[protein] = 3-O-(alpha-D-mannosyl)-L-threonyl-[protein] + a di-trans,poly-cis-dolichyl phosphate + H(+). Functionally, O-mannosyl-transferase that transfers mannosyl residues to the hydroxyl group of serine or threonine residues of proteins. Specifically glycosylates the IPT/TIG domain of target proteins, such as MET and MST1R/RON. TMEM260-mediated O-mannosylated residues are composed of single mannose glycans that are not elongated or modified. This Mus musculus (Mouse) protein is Protein O-mannosyl-transferase TMEM260.